The sequence spans 136 residues: Peptide methionine sulfoxide reductase MsrB (136 aa).

Positions 9–136 (DAEWKALLAE…NSASLDFKPK (128 aa)) constitute a MsrB domain. Residues Cys53, Cys56, Cys102, and Cys105 each coordinate Zn(2+). The active-site Nucleophile is the Cys125.

This sequence belongs to the MsrB Met sulfoxide reductase family. Requires Zn(2+) as cofactor.

The catalysed reaction is L-methionyl-[protein] + [thioredoxin]-disulfide + H2O = L-methionyl-(R)-S-oxide-[protein] + [thioredoxin]-dithiol. The chain is Peptide methionine sulfoxide reductase MsrB from Polaromonas sp. (strain JS666 / ATCC BAA-500).